Here is a 67-residue protein sequence, read N- to C-terminus: Photosystem II reaction center protein H (67 aa).

Residues 27-47 form a helical membrane-spanning segment; that stretch reads GAVPVMAFVGVLLLVFLVILL.

Belongs to the PsbH family. In terms of assembly, PSII is composed of 1 copy each of membrane proteins PsbA, PsbB, PsbC, PsbD, PsbE, PsbF, PsbH, PsbI, PsbJ, PsbK, PsbL, PsbM, PsbT, PsbX, PsbY, Psb30/Ycf12, peripheral proteins PsbO, CyanoQ (PsbQ), PsbU, PsbV and a large number of cofactors. It forms dimeric complexes.

Its subcellular location is the cellular thylakoid membrane. Functionally, one of the components of the core complex of photosystem II (PSII), required for its stability and/or assembly. PSII is a light-driven water:plastoquinone oxidoreductase that uses light energy to abstract electrons from H(2)O, generating O(2) and a proton gradient subsequently used for ATP formation. It consists of a core antenna complex that captures photons, and an electron transfer chain that converts photonic excitation into a charge separation. This chain is Photosystem II reaction center protein H, found in Prochlorococcus marinus (strain SARG / CCMP1375 / SS120).